Consider the following 529-residue polypeptide: Peptide chain release factor 3 (529 aa).

The tr-type G domain occupies 11 to 280 (AKRRTFAIIS…GLIEWAPQPM (270 aa)). Residues 20 to 27 (SHPDAGKT), 88 to 92 (DTPGH), and 142 to 145 (NKLD) each bind GTP.

Belongs to the TRAFAC class translation factor GTPase superfamily. Classic translation factor GTPase family. PrfC subfamily.

The protein localises to the cytoplasm. Increases the formation of ribosomal termination complexes and stimulates activities of RF-1 and RF-2. It binds guanine nucleotides and has strong preference for UGA stop codons. It may interact directly with the ribosome. The stimulation of RF-1 and RF-2 is significantly reduced by GTP and GDP, but not by GMP. This chain is Peptide chain release factor 3, found in Enterobacter sp. (strain 638).